Reading from the N-terminus, the 492-residue chain is Catalase (492 aa).

Catalysis depends on residues H65 and N138. Residue Y348 participates in heme binding.

Belongs to the catalase family. As to quaternary structure, homotetramer. Heme is required as a cofactor.

It localises to the cytoplasm. It is found in the cytosol. Its subcellular location is the peroxisome matrix. It catalyses the reaction 2 H2O2 = O2 + 2 H2O. Its function is as follows. Catalyzes the degradation of hydrogen peroxide (H(2)O(2)) generated by peroxisomal oxidases to water and oxygen, thereby protecting cells from the toxic effects of hydrogen peroxide. The chain is Catalase from Helianthus annuus (Common sunflower).